The following is a 149-amino-acid chain: Nucleoside diphosphate kinase 1 (149 aa).

ATP is bound by residues K9, F57, R85, T91, R102, and N112. The Pros-phosphohistidine intermediate role is filled by H115.

As to quaternary structure, homohexamer. The cofactor is Mg(2+).

The catalysed reaction is a 2'-deoxyribonucleoside 5'-diphosphate + ATP = a 2'-deoxyribonucleoside 5'-triphosphate + ADP. It carries out the reaction a ribonucleoside 5'-diphosphate + ATP = a ribonucleoside 5'-triphosphate + ADP. Major role in the synthesis of nucleoside triphosphates other than ATP. The ATP gamma phosphate is transferred to the NDP beta phosphate via a ping-pong mechanism, using a phosphorylated active-site intermediate. This NDK is microtubule-associated. This Oryza sativa subsp. indica (Rice) protein is Nucleoside diphosphate kinase 1 (NDKR).